Here is a 191-residue protein sequence, read N- to C-terminus: Adenylate kinase (191 aa).

Residue Gly12 to Thr17 participates in ATP binding. The segment at Ser34 to Val63 is NMP. AMP-binding positions include Thr35, Arg40, Glu61–Val63, Gly88–Arg91, and Gln95. Residues Gly130–Asp136 form an LID region. Arg131 serves as a coordination point for ATP. Residues Arg133 and Arg145 each contribute to the AMP site. Arg173 provides a ligand contact to ATP.

This sequence belongs to the adenylate kinase family. As to quaternary structure, monomer.

The protein resides in the cytoplasm. The catalysed reaction is AMP + ATP = 2 ADP. It functions in the pathway purine metabolism; AMP biosynthesis via salvage pathway; AMP from ADP: step 1/1. Catalyzes the reversible transfer of the terminal phosphate group between ATP and AMP. Plays an important role in cellular energy homeostasis and in adenine nucleotide metabolism. This Helicobacter pylori (strain ATCC 700392 / 26695) (Campylobacter pylori) protein is Adenylate kinase.